The following is a 713-amino-acid chain: MVKLAKAGKTHGESKKMAPPPKEVEEDSEDEEMSEDEDDSSGEEEVVIPQKKGKKATTTPAKKVVVSQTKKAAVPTPAKKAAVTPGKKAAATPAKKAVTPAKVVPTPGKKGAAQAKALVPTPGKKGAVTPAKGAKNGKNAKKEDSDEDEDEEDEDDSDEDEDEEDEFEPPVVKGVKPAKAAPAAPASEDEDEEDDDDEDDDDDDEEEEEEDDSEEEVMEITPAKGKKTPAKVVPVKAKSVAEEEEDDEDDEDEEEDEDEEDEEDDEDEDEEEEEEPVKAAPGKRKKEMTKQKEAPEAKKQKIEGSEPTTPFNLFIGNLNPNKSVAELKVAISELFAKNDLAAVDVRTGTNRKFGYVDFESAEDLEKALELTGLKVFGNEIKLEKPKGRDSKKVRAARTLLAKNLSFNITEDELKEVFEDAVEIRLVSQDGRSKGIAYIEFKSEADAEKNLEEKQGAEIDGRSVSLYYTGEKGQRQERTGKNSTWSGESKTLVLSNLSYSATEETLQEVFEKATFIKVPQNPHGKSKGYAFIEFASFEDAKEALNSCNKMEIEGRTIRLELQGPRGSPNARSQPSKTLFVKGLSEDTTEETLKESFEGSVRARIVTDRETGSSKGFGFVDFNSEEDAKAAKEAMEDGEIDGNKVTLDWAKPKGEGGFGGRGGGRGGFGGRGGGRGGRGGFGGRGRGGFGGRGGFRGGRGGGGDFKPQGKKTKFE.

The segment at 1–309 is disordered; it reads MVKLAKAGKT…QKIEGSEPTT (309 aa). Residues lysine 9, lysine 15, and lysine 16 each carry the N6-acetyllysine modification. A compositionally biased stretch (acidic residues) spans 24 to 46; that stretch reads VEEDSEDEEMSEDEDDSSGEEEV. Residues serine 28, serine 34, serine 40, and serine 41 each carry the phosphoserine modification. A compositionally biased stretch (low complexity) spans 56–111; that stretch reads ATTTPAKKVVVSQTKKAAVPTPAKKAAVTPGKKAAATPAKKAVTPAKVVPTPGKKG. Residues 58–65 form repeat 1; it reads TTPAKKVV. The segment at 58–135 is 8 X 8 AA tandem repeats of X-T-P-X-K-K-X-X; it reads TTPAKKVVVS…GAVTPAKGAK (78 aa). Serine 67 carries the post-translational modification Phosphoserine. A phosphothreonine mark is found at threonine 69, threonine 76, threonine 84, and threonine 92. 3 consecutive repeat copies span residues 75–82, 83–90, and 91–98. Lysine 96 bears the N6-acetyllysine mark. Threonine 99 bears the Phosphothreonine mark. A 5; truncated repeat occupies 99 to 104; that stretch reads TPAKVV. N6-acetyllysine is present on lysine 102. Residues 105–112 form repeat 6; that stretch reads PTPGKKGA. Threonine 106 is modified (phosphothreonine). N6-acetyllysine occurs at positions 109 and 116. 2 tandem repeats follow at residues 120 to 127 and 128 to 135. Threonine 121 is subject to Phosphothreonine. At lysine 124 the chain carries N6-acetyllysine. Phosphoserine occurs at positions 145 and 157. Over residues 145–168 the composition is skewed to acidic residues; sequence SDEDEDEEDEDDSDEDEDEEDEFE. Over residues 169–186 the composition is skewed to low complexity; it reads PPVVKGVKPAKAAPAAPA. Phosphoserine is present on residues serine 187 and serine 213. Over residues 187–218 the composition is skewed to acidic residues; that stretch reads SEDEDEEDDDDEDDDDDDEEEEEEDDSEEEVM. At threonine 221 the chain carries Phosphothreonine. The span at 242–275 shows a compositional bias: acidic residues; it reads EEEEDDEDDEDEEEDEDEEDEEDDEDEDEEEEEE. Residues 288–304 are compositionally biased toward basic and acidic residues; sequence MTKQKEAPEAKKQKIEG. Lysine 301 is covalently cross-linked (Glycyl lysine isopeptide (Lys-Gly) (interchain with G-Cter in SUMO1); alternate). Lysine 301 is covalently cross-linked (Glycyl lysine isopeptide (Lys-Gly) (interchain with G-Cter in SUMO2); alternate). Serine 305 is modified (phosphoserine). RRM domains follow at residues 311 to 387 and 397 to 470; these read FNLF…KPKG and RTLL…YTGE. The residue at position 322 (lysine 322) is an N6-acetyllysine. Lysine 328 is covalently cross-linked (Glycyl lysine isopeptide (Lys-Gly) (interchain with G-Cter in SUMO1); alternate). Lysine 328 participates in a covalent cross-link: Glycyl lysine isopeptide (Lys-Gly) (interchain with G-Cter in SUMO2); alternate. Lysine 352 carries the post-translational modification N6-acetyllysine. Serine 360 carries the phosphoserine modification. The residue at position 371 (threonine 371) is a Phosphothreonine. A Glycyl lysine isopeptide (Lys-Gly) (interchain with G-Cter in SUMO2) cross-link involves residue lysine 374. Lysine 381 participates in a covalent cross-link: Glycyl lysine isopeptide (Lys-Gly) (interchain with G-Cter in SUMO2); alternate. Position 381 is an N6-acetyllysine; alternate (lysine 381). Lysine 402 carries the post-translational modification N6-acetyllysine. A Phosphoserine modification is found at serine 405. Residue threonine 409 is modified to Phosphothreonine. At lysine 448 the chain carries N6-acetyllysine. A phosphoserine mark is found at serine 462 and serine 464. N6-acetyllysine is present on residues lysine 471 and lysine 480. The region spanning 489–563 is the RRM 3 domain; the sequence is KTLVLSNLSY…RTIRLELQGP (75 aa). A Glycyl lysine isopeptide (Lys-Gly) (interchain with G-Cter in SUMO2); alternate cross-link involves residue lysine 516. Lysine 516 carries the post-translational modification N6-acetyllysine; alternate. Lysine 524 is subject to N6-acetyllysine. Serine 566 bears the Phosphoserine mark. Position 575 is an N6-acetyllysine (lysine 575). Positions 575-650 constitute an RRM 4 domain; that stretch reads KTLFVKGLSE…NKVTLDWAKP (76 aa). Residue lysine 580 forms a Glycyl lysine isopeptide (Lys-Gly) (interchain with G-Cter in SUMO2); alternate linkage. Position 580 is an N6-acetyllysine; alternate (lysine 580). Serine 583 is modified (phosphoserine). Residue lysine 592 forms a Glycyl lysine isopeptide (Lys-Gly) (interchain with G-Cter in SUMO1); alternate linkage. Lysine 592 participates in a covalent cross-link: Glycyl lysine isopeptide (Lys-Gly) (interchain with G-Cter in SUMO2); alternate. Serine 594 and serine 622 each carry phosphoserine. A Glycyl lysine isopeptide (Lys-Gly) (interchain with G-Cter in SUMO2) cross-link involves residue lysine 627. Positions 645 to 713 are disordered; it reads LDWAKPKGEG…KPQGKKTKFE (69 aa). Position 649 is an N6-acetyllysine (lysine 649). The segment covering 653–702 has biased composition (gly residues); it reads EGGFGGRGGGRGGFGGRGGGRGGRGGFGGRGRGGFGGRGGFRGGRGGGGD. Asymmetric dimethylarginine occurs at positions 659, 663, 669, 673, 676, 682, 684, 690, and 694. Arginine 697 bears the Asymmetric dimethylarginine; alternate mark. Residue arginine 697 is modified to Omega-N-methylarginine; alternate.

In terms of assembly, identified in a IGF2BP1-dependent mRNP granule complex containing untranslated mRNAs. Component of the SWAP complex that consists of NPM1, NCL/nucleolin, PARP1 and SWAP70. Component of a complex which is at least composed of HTATSF1/Tat-SF1, the P-TEFb complex components CDK9 and CCNT1, RNA polymerase II, SUPT5H, and NCL/nucleolin. Interacts with AICDA. Interacts with APTX. Interacts with C1QBP. Interacts with ERBB4. Interacts (via C-terminus) with FMR1 isoform 6 (via N-terminus). Interacts with GZF1; this interaction is important for nucleolar localization of GZF1. Interacts with NSUN2. Interacts with NVL. Interacts (via N-terminus domain) with SETX. Interacts (via RRM1 and C-terminal RRM4/Arg/Gly-rich domains) with TERT; the interaction is important for nucleolar localization of TERT. Interacts with WDR46. Interacts with ZFP36. Interacts with LRRC34. Interacts with RRP1B. Interacts with HNRNPU; this interaction occurs during mitosis. Interacts with RIOK1; RIOK1 recruits NCL to PRMT5 for symmetrically methylation. Interacts with ZBTB7B. Interacts with MDK; this interaction promotes NCL clustering and lateral movements of this complex into lipid rafts leading to MDK internalization. Interacts with HDGF. Interacts with ALKBH2. Interacts with IGFBP5; this interaction is necessary for IGFBP5 localization to the nucleus. Interacts with DDX24 (when ubiquitinated); this interaction may be important during ribosome biogenesis. Post-translationally, some glutamate residues are glycylated by TTLL8. This modification occurs exclusively on glutamate residues and results in a glycine chain on the gamma-carboxyl group. Symmetrically methylated by PRMT5.

The protein localises to the nucleus. The protein resides in the nucleolus. It localises to the cytoplasm. Functionally, nucleolin is the major nucleolar protein of growing eukaryotic cells. It is found associated with intranucleolar chromatin and pre-ribosomal particles. It induces chromatin decondensation by binding to histone H1. It is thought to play a role in pre-rRNA transcription and ribosome assembly. May play a role in the process of transcriptional elongation. Binds RNA oligonucleotides with 5'-UUAGGG-3' repeats more tightly than the telomeric single-stranded DNA 5'-TTAGGG-3' repeats. The protein is Nucleolin (Ncl) of Rattus norvegicus (Rat).